A 438-amino-acid chain; its full sequence is Adenylosuccinate synthetase (438 aa).

GTP-binding positions include 13-19 and 41-43; these read GDEGKGK and GHT. Aspartate 14 serves as the catalytic Proton acceptor. Positions 14 and 41 each coordinate Mg(2+). IMP-binding positions include 14–17, 39–42, threonine 136, arginine 150, glutamine 231, threonine 246, and arginine 310; these read DEGK and NAGH. The active-site Proton donor is histidine 42. 306–312 is a substrate binding site; the sequence is STTGRRR. Residues arginine 312, 338–340, and 421–423 contribute to the GTP site; these read KID and STG.

Belongs to the adenylosuccinate synthetase family. Homodimer. Requires Mg(2+) as cofactor.

Its subcellular location is the cytoplasm. It carries out the reaction IMP + L-aspartate + GTP = N(6)-(1,2-dicarboxyethyl)-AMP + GDP + phosphate + 2 H(+). The protein operates within purine metabolism; AMP biosynthesis via de novo pathway; AMP from IMP: step 1/2. Its function is as follows. Plays an important role in the de novo pathway of purine nucleotide biosynthesis. Catalyzes the first committed step in the biosynthesis of AMP from IMP. The protein is Adenylosuccinate synthetase of Blochmanniella floridana.